The sequence spans 369 residues: Maltose/maltodextrin import ATP-binding protein MalK (369 aa).

The region spanning 4–234 (VQLRNVTKAW…PADRFVAGFI (231 aa)) is the ABC transporter domain. 36 to 43 (GPSGCGKS) provides a ligand contact to ATP.

It belongs to the ABC transporter superfamily. Maltooligosaccharide importer (TC 3.A.1.1.1) family. As to quaternary structure, the complex is composed of two ATP-binding proteins (MalK), two transmembrane proteins (MalG and MalK) and a solute-binding protein (MalE).

Its subcellular location is the cell inner membrane. It carries out the reaction D-maltose(out) + ATP + H2O = D-maltose(in) + ADP + phosphate + H(+). Its function is as follows. Part of the ABC transporter complex MalEFGK involved in maltose/maltodextrin import. Responsible for energy coupling to the transport system. In Salmonella paratyphi A (strain ATCC 9150 / SARB42), this protein is Maltose/maltodextrin import ATP-binding protein MalK.